The sequence spans 159 residues: Probable chemoreceptor glutamine deamidase CheD 1 (159 aa).

The protein belongs to the CheD family.

It catalyses the reaction L-glutaminyl-[protein] + H2O = L-glutamyl-[protein] + NH4(+). Probably deamidates glutamine residues to glutamate on methyl-accepting chemotaxis receptors (MCPs), playing an important role in chemotaxis. This chain is Probable chemoreceptor glutamine deamidase CheD 1, found in Methanosarcina acetivorans (strain ATCC 35395 / DSM 2834 / JCM 12185 / C2A).